The following is a 136-amino-acid chain: Riboflavin kinase (136 aa).

15–20 is a binding site for CDP; that stretch reads GLGEGR. Residues Thr44 and Asn46 each contribute to the Mg(2+) site. FMN-binding residues include Thr103 and Glu111. Residue 116 to 119 coordinates CDP; it reads YYLR.

This sequence belongs to the archaeal riboflavin kinase family. It depends on Mg(2+) as a cofactor.

The enzyme catalyses riboflavin + CTP = CDP + FMN + H(+). The protein operates within cofactor biosynthesis; FMN biosynthesis; FMN from riboflavin (CTP route): step 1/1. In terms of biological role, catalyzes the CTP-dependent phosphorylation of riboflavin (vitamin B2) to form flavin mononucleotide (FMN). This chain is Riboflavin kinase, found in Sulfurisphaera tokodaii (strain DSM 16993 / JCM 10545 / NBRC 100140 / 7) (Sulfolobus tokodaii).